A 275-amino-acid chain; its full sequence is Large ribosomal subunit protein uL2 (275 aa).

A compositionally biased stretch (polar residues) spans 38-53; the sequence is SSKAGRNNNGRITTRH. 2 disordered regions span residues 38-59 and 224-257; these read SSKA…GGHK and AMNP…KGFR.

The protein belongs to the universal ribosomal protein uL2 family. In terms of assembly, part of the 50S ribosomal subunit. Forms a bridge to the 30S subunit in the 70S ribosome.

Its function is as follows. One of the primary rRNA binding proteins. Required for association of the 30S and 50S subunits to form the 70S ribosome, for tRNA binding and peptide bond formation. It has been suggested to have peptidyltransferase activity; this is somewhat controversial. Makes several contacts with the 16S rRNA in the 70S ribosome. The sequence is that of Large ribosomal subunit protein uL2 from Burkholderia multivorans (strain ATCC 17616 / 249).